A 147-amino-acid polypeptide reads, in one-letter code: Prefoldin subunit alpha (147 aa).

This sequence belongs to the prefoldin alpha subunit family. In terms of assembly, heterohexamer of two alpha and four beta subunits.

It localises to the cytoplasm. Its function is as follows. Molecular chaperone capable of stabilizing a range of proteins. Seems to fulfill an ATP-independent, HSP70-like function in archaeal de novo protein folding. This Saccharolobus islandicus (strain L.S.2.15 / Lassen #1) (Sulfolobus islandicus) protein is Prefoldin subunit alpha.